Here is a 214-residue protein sequence, read N- to C-terminus: NADH-quinone oxidoreductase subunit C (214 aa).

The protein belongs to the complex I 30 kDa subunit family. In terms of assembly, NDH-1 is composed of 14 different subunits. Subunits NuoB, C, D, E, F, and G constitute the peripheral sector of the complex.

It is found in the cell inner membrane. The enzyme catalyses a quinone + NADH + 5 H(+)(in) = a quinol + NAD(+) + 4 H(+)(out). NDH-1 shuttles electrons from NADH, via FMN and iron-sulfur (Fe-S) centers, to quinones in the respiratory chain. The immediate electron acceptor for the enzyme in this species is believed to be ubiquinone. Couples the redox reaction to proton translocation (for every two electrons transferred, four hydrogen ions are translocated across the cytoplasmic membrane), and thus conserves the redox energy in a proton gradient. The polypeptide is NADH-quinone oxidoreductase subunit C (Francisella tularensis subsp. holarctica (strain LVS)).